The chain runs to 1170 residues: Integrin alpha-2 (1170 aa).

Residues 1-18 form the signal peptide; it reads PLQLVLVFSQGILNCCVA. At 19–1121 the chain is on the extracellular side; that stretch reads YNVGLPKAKI…KPHEKVEVPT (1103 aa). FG-GAP repeat units follow at residues 23 to 81 and 90 to 150; these read LPKA…TTTC and TSMS…LRTS. An intrachain disulfide couples cysteine 72 to cysteine 81. N-linked (GlcNAc...) asparagine glycans are attached at residues asparagine 94, asparagine 101, and asparagine 332. The VWFA domain occupies 177–354; that stretch reads WDAVKNFLEK…TIGEQIFSIE (178 aa). 5 FG-GAP repeats span residues 355–409, 412–464, 466–528, 529–587, and 591–653; these read GTVQ…LIFS, AFEQ…ENGN, TVIQ…ILNW, HQFL…MIRL, and QKIL…FTPK. Asparagine 421, asparagine 449, and asparagine 464 each carry an N-linked (GlcNAc...) asparagine glycan. A Cell attachment site motif is present at residues 472–474; the sequence is RGD. The Ca(2+) site is built by aspartate 488, asparagine 490, aspartate 492, aspartate 496, aspartate 552, asparagine 554, aspartate 556, aspartate 560, aspartate 616, asparagine 618, aspartate 620, and aspartate 624. A disulfide bridge links cysteine 669 with cysteine 726. N-linked (GlcNAc...) asparagine glycans are attached at residues asparagine 688 and asparagine 748. 2 disulfide bridges follow: cysteine 778-cysteine 784 and cysteine 854-cysteine 865. Residue asparagine 945 is glycosylated (N-linked (GlcNAc...) asparagine). Cystine bridges form between cysteine 1008/cysteine 1039 and cysteine 1044/cysteine 1049. N-linked (GlcNAc...) asparagine glycans are attached at residues asparagine 1063 and asparagine 1070. A helical transmembrane segment spans residues 1122-1143; that stretch reads GVIVGSVIAGILLLLALVAILW. Topologically, residues 1144–1170 are cytoplasmic; sequence KLGFFKRKYEKMAKNPDETDETTELNS. The short motif at 1146 to 1150 is the GFFKR motif element; sequence GFFKR.

The protein belongs to the integrin alpha chain family. In terms of assembly, heterodimer of an alpha and a beta subunit. Alpha-2 associates with beta-1. Interacts with HPS5 and RAB21.

It is found in the membrane. Integrin alpha-2/beta-1 is a receptor for laminin, collagen, collagen C-propeptides, fibronectin and E-cadherin. It recognizes the proline-hydroxylated sequence G-F-P-G-E-R in collagen. It is responsible for adhesion of platelets and other cells to collagens, modulation of collagen and collagenase gene expression, force generation and organization of newly synthesized extracellular matrix. This Bos taurus (Bovine) protein is Integrin alpha-2 (ITGA2).